A 104-amino-acid chain; its full sequence is MIKLKIKTGDIVRVIAGDHKGAEGKVVKVDREKNKAIVEGVNMVSKHTKPSAKSPQGGIVKKEAPIQISNVSLIDPKTKEATRVGIRVEGDKKVRFSKKSNQVL.

It belongs to the universal ribosomal protein uL24 family. Part of the 50S ribosomal subunit.

One of two assembly initiator proteins, it binds directly to the 5'-end of the 23S rRNA, where it nucleates assembly of the 50S subunit. Functionally, one of the proteins that surrounds the polypeptide exit tunnel on the outside of the subunit. The protein is Large ribosomal subunit protein uL24 of Flavobacterium psychrophilum (strain ATCC 49511 / DSM 21280 / CIP 103535 / JIP02/86).